We begin with the raw amino-acid sequence, 382 residues long: Anhydro-N-acetylmuramic acid kinase (382 aa).

Residue 9 to 16 (GTSLDGID) participates in ATP binding.

This sequence belongs to the anhydro-N-acetylmuramic acid kinase family.

It carries out the reaction 1,6-anhydro-N-acetyl-beta-muramate + ATP + H2O = N-acetyl-D-muramate 6-phosphate + ADP + H(+). The protein operates within amino-sugar metabolism; 1,6-anhydro-N-acetylmuramate degradation. Its pathway is cell wall biogenesis; peptidoglycan recycling. Catalyzes the specific phosphorylation of 1,6-anhydro-N-acetylmuramic acid (anhMurNAc) with the simultaneous cleavage of the 1,6-anhydro ring, generating MurNAc-6-P. Is required for the utilization of anhMurNAc either imported from the medium or derived from its own cell wall murein, and thus plays a role in cell wall recycling. This chain is Anhydro-N-acetylmuramic acid kinase, found in Bacillus cereus (strain G9842).